The chain runs to 640 residues: Zinc finger and BTB domain-containing protein 22 (640 aa).

The 65-residue stretch at 57–121 (CDVSIRVQGR…AYTGRLSMAA (65 aa)) folds into the BTB domain. Disordered regions lie at residues 191–244 (RSHA…PVFP), 308–327 (PAPA…EEED), and 332–482 (CEDD…GGTG). A compositionally biased stretch (polar residues) spans 192 to 210 (SHASSRASENQSPSSSNYF). Serine 203 carries the phosphoserine modification. A compositionally biased stretch (acidic residues) spans 318–327 (PDLEEDEEED). Over residues 431–442 (SSSSSSSSSSSS) the composition is skewed to low complexity. The span at 469–482 (GMPGGPGGTPGGTG) shows a compositional bias: gly residues. Residues 490–511 (FLCHCGKAFSHKSMRDRHVNMH) form a C2H2-type 1; atypical zinc finger. 2 consecutive C2H2-type zinc fingers follow at residues 517-539 (FDCP…MKTH) and 545-571 (YECG…ERRH). The interval 571–640 (HRLVGGGGGG…MGFGGGGGTN (70 aa)) is disordered. The span at 574 to 588 (VGGGGGGGPGPGGPT) shows a compositional bias: gly residues.

It belongs to the krueppel C2H2-type zinc-finger protein family.

It is found in the nucleus. In terms of biological role, may be involved in transcriptional regulation. In Canis lupus familiaris (Dog), this protein is Zinc finger and BTB domain-containing protein 22 (ZBTB22).